We begin with the raw amino-acid sequence, 239 residues long: Protein canopy homolog 4 (239 aa).

Residues 1 to 20 (MGPVRLGTLLFILTVYGAWA) form the signal peptide. 3 disulfides stabilise this stretch: Cys37-Cys195, Cys40-Cys183, and Cys93-Cys155. Positions 199 to 239 (TWTGKEKITDGQEKTEEEEQDQEEEEMTNTPVHSQHDPEDL) are disordered. Positions 201-212 (TGKEKITDGQEK) are enriched in basic and acidic residues. A compositionally biased stretch (acidic residues) spans 213-225 (TEEEEQDQEEEEM).

It belongs to the canopy family. In terms of assembly, interacts with TLR4.

Its subcellular location is the secreted. In terms of biological role, plays a role in the regulation of the cell surface expression of TLR4. The polypeptide is Protein canopy homolog 4 (CNPY4) (Bos taurus (Bovine)).